We begin with the raw amino-acid sequence, 442 residues long: Thymidine phosphorylase (442 aa).

This sequence belongs to the thymidine/pyrimidine-nucleoside phosphorylase family. In terms of assembly, homodimer.

It carries out the reaction thymidine + phosphate = 2-deoxy-alpha-D-ribose 1-phosphate + thymine. Its pathway is pyrimidine metabolism; dTMP biosynthesis via salvage pathway; dTMP from thymine: step 1/2. Its function is as follows. The enzymes which catalyze the reversible phosphorolysis of pyrimidine nucleosides are involved in the degradation of these compounds and in their utilization as carbon and energy sources, or in the rescue of pyrimidine bases for nucleotide synthesis. The protein is Thymidine phosphorylase of Vibrio parahaemolyticus serotype O3:K6 (strain RIMD 2210633).